We begin with the raw amino-acid sequence, 392 residues long: Probable glycerol-3-phosphate dehydrogenase 2 (392 aa).

NAD(+)-binding positions include 42-47 (GSGNWG), phenylalanine 130, lysine 153, and alanine 196. Position 153 (lysine 153) interacts with substrate. Lysine 248 serves as the catalytic Proton acceptor. Residues arginine 312 and glutamine 341 each contribute to the NAD(+) site. Substrate is bound at residue 312–313 (RN).

This sequence belongs to the NAD-dependent glycerol-3-phosphate dehydrogenase family. In terms of assembly, homodimer.

It localises to the cytoplasm. The enzyme catalyses sn-glycerol 3-phosphate + NAD(+) = dihydroxyacetone phosphate + NADH + H(+). The sequence is that of Probable glycerol-3-phosphate dehydrogenase 2 (gpdh-2) from Caenorhabditis elegans.